Reading from the N-terminus, the 267-residue chain is C-type lectin domain family 12 member A (267 aa).

At 1–43 the chain is on the cytoplasmic side; that stretch reads MSEEIVYANLKIQDPDKKEETQKSDKCGGKVSADASHSQQKTV. The ITIM motif motif lies at 5-10; it reads IVYANL. Position 7 is a phosphotyrosine (Tyr7). The helical; Signal-anchor for type II membrane protein transmembrane segment at 44–64 threads the bilayer; it reads LILILLCLLLFIGMGVLGGIF. Residues 65 to 267 lie on the Extracellular side of the membrane; that stretch reads YTTLATEMIK…VLNGLPEDSR (203 aa). 2 N-linked (GlcNAc...) asparagine glycosylation sites follow: Asn98 and Asn105. 4 disulfides stabilise this stretch: Cys118–Cys130, Cys133–Cys144, Cys161–Cys246, and Cys225–Cys238. The region spanning 140 to 247 is the C-type lectin domain; that stretch reads YKDSCYSQLN…CTDENNIICE (108 aa). Asn165 carries N-linked (GlcNAc...) asparagine glycosylation.

As to quaternary structure, homodimer; disulfide-linked. Interacts (when the ITIM motif is phosphorylated) with PTPN6 and PTPN11. Post-translationally, phosphorylated at Tyr-7 by SRC in the ITIM motif following ligand-binding, promoting recruitment of tyrosine-protein phosphatases PTPN6 and PTPN11. Mainly expressed in lymphoid tissues. Preferentially expressed in peripheral blood leukocytes; less frequent in thymus, spleen, heart, brain and lung; and undetectable in other tissues.

It localises to the cell membrane. Functionally, myeloid inhibitory C-type lectin receptor that acts as a negative regulator of myeloid cell activation. Myeloid cell inhibition is required to limit proinflammatory pathways and protect against excessive inflammation. Specifically recognizes and binds various structures, such as neutrophil extracellular traps (NETs) or monosodium urate crystals. Also acts as a pattern-recognition receptor for pathogen-associated molecules, such as plasmodium hemozoin or mycobacterial micolic acid. Ligand-binding induces phosphorylation of its ITIM motif, followed by recruitment of tyrosine-protein phosphatases PTPN6 and PTPN11, which counteract tyrosine-protein kinase SYK, thereby preventing myeloid cell activation. Acts as a pattern-recognition receptor for NETs in neutrophils: specifically recognizes DNA in NETs, leading to inhibit neutrophil activation and limit further NET formation. This regulation is essential for controlling key neutrophil responses and limit NET-mediated inflammatory conditions. Also recognizes dead cells by acting as a receptor for monosodium urate crystals, leading to down-regulate neutrophil activation. Binding to monosodium urate crystals also promotes the type I interferon response. Acts as an inhibitor of natural killer (NK) cell cytotoxicity. Also acts as an ihibitor of dendritic cell maturation in an IL10-dependent manner. The protein is C-type lectin domain family 12 member A of Mus musculus (Mouse).